A 759-amino-acid polypeptide reads, in one-letter code: RNA-binding protein 28 (759 aa).

N-acetylalanine is present on A2. The RRM 1 domain occupies 4 to 80 (LTLFVGRLPP…CKINVTVAKK (77 aa)). Residues 84 to 105 (NKTKEKGKNENSECPKKEPKAK) are disordered. Positions 85–101 (KTKEKGKNENSECPKKE) are enriched in basic and acidic residues. One can recognise an RRM 2 domain in the interval 114–191 (ARLIIRNLSF…RTVAVDWAVA (78 aa)). S122 carries the phosphoserine modification. A disordered region spans residues 201–330 (VSAIGEEKSH…NKKKRKLPSD (130 aa)). Basic and acidic residues predominate over residues 205 to 224 (GEEKSHESKHQESVKKKGRE). 2 stretches are compositionally biased toward acidic residues: residues 225–256 (EEDM…EEEN) and 284–313 (SEED…EEQE). RRM domains follow at residues 335–419 (KTVF…LAVT) and 487–597 (TRLC…RSLQ). S397 carries the post-translational modification Phosphoserine. The disordered stretch occupies residues 594–759 (RSLQKMRSKP…LAKRSKWFDS (166 aa)). Basic and acidic residues predominate over residues 615 to 640 (PAKDQQQKAAQHHTEEQSKVPPEQKR). K653 participates in a covalent cross-link: Glycyl lysine isopeptide (Lys-Gly) (interchain with G-Cter in SUMO2). Basic residues predominate over residues 689-698 (VKPVHPKKPK). The span at 700–715 (QINQWKQEKQQLSSEQ) shows a compositional bias: polar residues.

Interacts with U1, U2, U4, U5, and U6 spliceosomal small nuclear RNAs (snRNAs). In terms of tissue distribution, ubiquitously expressed.

Its subcellular location is the nucleus. It localises to the nucleolus. Its function is as follows. Nucleolar component of the spliceosomal ribonucleoprotein complexes. The polypeptide is RNA-binding protein 28 (RBM28) (Homo sapiens (Human)).